A 349-amino-acid chain; its full sequence is Methylglutaconyl-CoA hydratase 1, mitochondrial (349 aa).

The transit peptide at 1-37 (MPPVSRILSYAPRVAIRPSSQLARPARAFAVGTVRYY) directs the protein to the mitochondrion.

It belongs to the enoyl-CoA hydratase/isomerase family. Homohexamer.

Its subcellular location is the mitochondrion. It catalyses the reaction (3S)-3-hydroxy-3-methylglutaryl-CoA = 3-methyl-(2E)-glutaconyl-CoA + H2O. Its pathway is amino-acid degradation; L-leucine degradation; (S)-3-hydroxy-3-methylglutaryl-CoA from 3-isovaleryl-CoA: step 3/3. Its function is as follows. 3-methylglutaconyl-CoA hydratase that catalyzes the fifth step in the leucine degradation pathway, the reversible hydration of 3-methylglutaconyl-CoA (3-MG-CoA) to 3-hydroxy-3-methylglutaryl-CoA (HMG-CoA). Involved in vegetative growth, conidiation and in the stress response. Controls mitochondrial morphology and mitophagy, which are critical for the infectious growth of the pathogen. The polypeptide is Methylglutaconyl-CoA hydratase 1, mitochondrial (Pyricularia oryzae (strain 70-15 / ATCC MYA-4617 / FGSC 8958) (Rice blast fungus)).